The sequence spans 245 residues: NAD-dependent protein deacetylase (245 aa).

Positions 1–245 (MIFVQQFEEV…EFVEGLSSMK (245 aa)) constitute a Deacetylase sirtuin-type domain. The NAD(+) site is built by Ala26, Thr30, Phe37, Arg38, Gln105, Ile107, Asp108, and His123. Position 37 (Phe37) interacts with nicotinamide. Nicotinamide-binding residues include Ile107 and Asp108. The Proton acceptor role is filled by His123. The Zn(2+) site is built by Cys131, Cys134, Cys151, and Cys154. NAD(+) contacts are provided by Thr190, Ser191, Asn216, and Ile234.

The protein belongs to the sirtuin family. Class U subfamily. Requires Zn(2+) as cofactor.

It localises to the cytoplasm. It catalyses the reaction N(6)-acetyl-L-lysyl-[protein] + NAD(+) + H2O = 2''-O-acetyl-ADP-D-ribose + nicotinamide + L-lysyl-[protein]. Its function is as follows. NAD-dependent protein deacetylase which modulates the activities of several enzymes which are inactive in their acetylated form. In Bacillus cereus (strain ATCC 14579 / DSM 31 / CCUG 7414 / JCM 2152 / NBRC 15305 / NCIMB 9373 / NCTC 2599 / NRRL B-3711), this protein is NAD-dependent protein deacetylase.